Here is a 407-residue protein sequence, read N- to C-terminus: MAYQEPNKDGFYGKFGGRFVPETLMTAVLELEKAYRESQADPSFQEELNQLLRQYVGRETPLYYAKNLTQHIGGAKIYLKREDLNHTGAHKINNALGQVWLAKRMGKKKIIAETGAGQHGVATATAAALFNMECTIYMGEEDVKRQALNVFRMELLGAKVEAVTDGSRVLKDAVNAALRSWVANIDDTHYILGSALGPHPFPEIVRDFQSVIGREAKQQYRDMTGQDLPDALVACVGGGSNAIGLFHPFVEDESVAMYGTEAAGLGVDTEHHAATLTKGRPGVLHGSLMDVLQDAHGQILEAFSISAGLDYPGIGPEHSHYHDIKRASYVPVTDEEALEGFQLLSRVEGIIPALESSHAIAFAVKLAKELGPEKSMIVCLSGRGDKDVVQVKDRLEADAAKKGEAHA.

Lys-91 is subject to N6-(pyridoxal phosphate)lysine.

This sequence belongs to the TrpB family. In terms of assembly, tetramer of two alpha and two beta chains. Requires pyridoxal 5'-phosphate as cofactor.

The enzyme catalyses (1S,2R)-1-C-(indol-3-yl)glycerol 3-phosphate + L-serine = D-glyceraldehyde 3-phosphate + L-tryptophan + H2O. It functions in the pathway amino-acid biosynthesis; L-tryptophan biosynthesis; L-tryptophan from chorismate: step 5/5. Functionally, the beta subunit is responsible for the synthesis of L-tryptophan from indole and L-serine. In Streptococcus pneumoniae (strain P1031), this protein is Tryptophan synthase beta chain.